The following is a 677-amino-acid chain: Methionine--tRNA ligase (677 aa).

Positions 15-25 match the 'HIGH' region motif; the sequence is PYANGSIHLGH. Zn(2+) contacts are provided by cysteine 146, cysteine 149, cysteine 159, and cysteine 162. The 'KMSKS' region signature appears at 333 to 337; it reads KMSKS. Lysine 336 is an ATP binding site. The tRNA-binding domain maps to 575–677; sequence DFAKVDLRVA…DGAKPGQQVK (103 aa).

It belongs to the class-I aminoacyl-tRNA synthetase family. MetG type 1 subfamily. Homodimer. The cofactor is Zn(2+).

The protein localises to the cytoplasm. The catalysed reaction is tRNA(Met) + L-methionine + ATP = L-methionyl-tRNA(Met) + AMP + diphosphate. Is required not only for elongation of protein synthesis but also for the initiation of all mRNA translation through initiator tRNA(fMet) aminoacylation. This Salmonella schwarzengrund (strain CVM19633) protein is Methionine--tRNA ligase.